A 238-amino-acid chain; its full sequence is ATP synthase subunit a (238 aa).

A run of 4 helical transmembrane segments spans residues Leu-17–Cys-37, Ile-80–Ile-100, Asp-112–Ile-132, and Ile-194–Ile-214.

This sequence belongs to the ATPase A chain family. F-type ATPases have 2 components, CF(1) - the catalytic core - and CF(0) - the membrane proton channel. CF(1) has five subunits: alpha(3), beta(3), gamma(1), delta(1), epsilon(1). CF(0) has three main subunits: a(1), b(2) and c(9-12). The alpha and beta chains form an alternating ring which encloses part of the gamma chain. CF(1) is attached to CF(0) by a central stalk formed by the gamma and epsilon chains, while a peripheral stalk is formed by the delta and b chains.

The protein resides in the cell membrane. In terms of biological role, key component of the proton channel; it plays a direct role in the translocation of protons across the membrane. The protein is ATP synthase subunit a of Listeria innocua serovar 6a (strain ATCC BAA-680 / CLIP 11262).